The sequence spans 434 residues: Innexin-14 (434 aa).

4 helical membrane passes run 30-50, 106-126, 301-321, and 365-385; these read LFTVYLLGFFVLLTGAKQHFG, WVPFFFAFQVCCFLLPFWCWA, IFIGLYFWLLVLTALSVIGTV, and YLCADGILLIYFMMDTNGFLK.

The protein belongs to the pannexin family.

Its subcellular location is the cell membrane. It localises to the cell junction. The protein resides in the gap junction. Structural component of the gap junctions. The sequence is that of Innexin-14 (inx-14) from Caenorhabditis elegans.